Consider the following 262-residue polypeptide: uncharacterized protein (262 aa).

Transmembrane regions (helical) follow at residues 4–24 (LIVF…RFLG), 28–48 (VSRF…CLFR), and 62–82 (CYLA…SHIL). Residues 152–181 (EREARAQEHDRISAEVETITSACENLEAAM) are a coiled coil.

Its subcellular location is the mitochondrion membrane. This is an uncharacterized protein from Arabidopsis thaliana (Mouse-ear cress).